Reading from the N-terminus, the 70-residue chain is Protein SlyX homolog (70 aa).

This sequence belongs to the SlyX family.

The sequence is that of Protein SlyX homolog from Shewanella sp. (strain MR-4).